Here is a 456-residue protein sequence, read N- to C-terminus: 26S proteasome non-ATPase regulatory subunit 12 (456 aa).

An N-acetylalanine modification is found at alanine 2. A Glycyl lysine isopeptide (Lys-Gly) (interchain with G-Cter in SUMO1); alternate cross-link involves residue lysine 92. Lysine 92 participates in a covalent cross-link: Glycyl lysine isopeptide (Lys-Gly) (interchain with G-Cter in SUMO2); alternate. Residues 242 to 420 (SICKHYRAIY…GVINFQRPKD (179 aa)) form the PCI domain. At lysine 368 the chain carries N6-acetyllysine.

Belongs to the proteasome subunit p55 family. Component of the 19S proteasome regulatory particle complex. The 26S proteasome consists of a 20S core particle (CP) and two 19S regulatory subunits (RP). The regulatory particle is made of a lid composed of 9 subunits including PSMD12, a base containing 6 ATPases and few additional components. Interacts with ERCC6.

In terms of biological role, component of the 26S proteasome, a multiprotein complex involved in the ATP-dependent degradation of ubiquitinated proteins. This complex plays a key role in the maintenance of protein homeostasis by removing misfolded or damaged proteins, which could impair cellular functions, and by removing proteins whose functions are no longer required. Therefore, the proteasome participates in numerous cellular processes, including cell cycle progression, apoptosis, or DNA damage repair. The sequence is that of 26S proteasome non-ATPase regulatory subunit 12 (Psmd12) from Mus musculus (Mouse).